The sequence spans 172 residues: Type IV secretion system putative outer membrane lipoprotein BMEII0036 (172 aa).

A signal peptide spans 1–15 (MRTLVMVACAVSLAA). Cysteine 16 carries the N-palmitoyl cysteine lipid modification. Cysteine 16 carries S-diacylglycerol cysteine lipidation. Positions 58–172 (WPARPPKQTV…RRVDIEILRK (115 aa)) constitute an OmpA-like domain.

It localises to the cell outer membrane. This is Type IV secretion system putative outer membrane lipoprotein BMEII0036 from Brucella melitensis biotype 1 (strain ATCC 23456 / CCUG 17765 / NCTC 10094 / 16M).